The following is a 104-amino-acid chain: ATP-dependent Clp protease adapter protein ClpS (104 aa).

It belongs to the ClpS family. Binds to the N-terminal domain of the chaperone ClpA.

Involved in the modulation of the specificity of the ClpAP-mediated ATP-dependent protein degradation. The polypeptide is ATP-dependent Clp protease adapter protein ClpS (Nitratidesulfovibrio vulgaris (strain ATCC 29579 / DSM 644 / CCUG 34227 / NCIMB 8303 / VKM B-1760 / Hildenborough) (Desulfovibrio vulgaris)).